The following is a 148-amino-acid chain: Large ribosomal subunit protein bL9 (148 aa).

It belongs to the bacterial ribosomal protein bL9 family.

Binds to the 23S rRNA. The sequence is that of Large ribosomal subunit protein bL9 from Heliobacterium modesticaldum (strain ATCC 51547 / Ice1).